We begin with the raw amino-acid sequence, 158 residues long: MAVSDLSHRFEGESVGRALELVGERWTLLILREAFFGVRRFGQLARNLGIPRPTLSSRLRMLVELGLFDRVPYSSDPERHEYRLTEAGRDLFAAIVVLMQWGDEYLPRPEGPPIKLRHHTCGEHADPRLICTHCGEEITARNVTPEPGPGFKAKLASS.

The HTH hxlR-type domain maps to 13-110 (ESVGRALELV…WGDEYLPRPE (98 aa)).

This is an uncharacterized protein from Mycobacterium tuberculosis (strain CDC 1551 / Oshkosh).